The chain runs to 658 residues: Structure-specific endonuclease subunit SLX1 (658 aa).

The 81-residue stretch at 12–92 folds into the GIY-YIG domain; sequence PFYACYFLRS…AKPHLSRHLK (81 aa). 4 disordered regions span residues 29–52, 239–269, 288–328, and 594–658; these read YIGSTPAPPRRKRQHNGHLTQGAY, GVAEHPVKKRQTSSRQKPHTEETSAWPETLP, PIPQ…NGVD, and TTSR…IDLT. Basic and acidic residues-rich tracts occupy residues 308 to 324 and 627 to 640; these read KLSDKARPSALEDHDAE and SKIDGDGAGKDTKK. A compositionally biased stretch (polar residues) spans 641–652; the sequence is NTTQKAKSNETS.

The protein belongs to the SLX1 family. As to quaternary structure, forms a heterodimer with SLX4. A divalent metal cation is required as a cofactor.

Its subcellular location is the nucleus. In terms of biological role, catalytic subunit of the SLX1-SLX4 structure-specific endonuclease that resolves DNA secondary structures generated during DNA repair and recombination. Has endonuclease activity towards branched DNA substrates, introducing single-strand cuts in duplex DNA close to junctions with ss-DNA. The protein is Structure-specific endonuclease subunit SLX1 of Mycosarcoma maydis (Corn smut fungus).